The sequence spans 154 residues: Nuclear cap-binding protein subunit 2 (154 aa).

Residues Tyr10, Tyr33, 102-106, 113-117, and 123-124 contribute to the mRNA site; these read RCDWD, RQYGR, and QV. Positions 30-108 constitute an RRM domain; it reads STLYMGNLSF…RIIRCDWDAG (79 aa).

The protein belongs to the RRM NCBP2 family. In terms of assembly, component of the nuclear cap-binding complex (CBC), a heterodimer composed of Cbp80 and Cbp20 that interacts with m7GpppG-capped RNA.

The protein localises to the nucleus. Component of the cap-binding complex (CBC), which binds co-transcriptionally to the 5' cap of pre-mRNAs and is involved in various processes such as pre-mRNA splicing and RNA-mediated gene silencing (RNAi). The CBC complex is involved in miRNA-mediated RNA interference and is required for primary microRNAs (miRNAs) processing. Also involved in innate immunity via the short interfering RNAs (siRNAs) processing machinery by restricting the viral RNA production. In the CBC complex, Cbp20 recognizes and binds capped RNAs (m7GpppG-capped RNA) but requires Cbp80 to stabilize the movement of its N-terminal loop and lock the CBC into a high affinity cap-binding state with the cap structure. The sequence is that of Nuclear cap-binding protein subunit 2 from Bombyx mori (Silk moth).